The chain runs to 75 residues: DNA-directed RNA polymerase subunit omega (75 aa).

It belongs to the RNA polymerase subunit omega family. As to quaternary structure, the RNAP catalytic core consists of 2 alpha, 1 beta, 1 beta' and 1 omega subunit. When a sigma factor is associated with the core the holoenzyme is formed, which can initiate transcription.

It catalyses the reaction RNA(n) + a ribonucleoside 5'-triphosphate = RNA(n+1) + diphosphate. Promotes RNA polymerase assembly. Latches the N- and C-terminal regions of the beta' subunit thereby facilitating its interaction with the beta and alpha subunits. In Thermosipho melanesiensis (strain DSM 12029 / CIP 104789 / BI429), this protein is DNA-directed RNA polymerase subunit omega.